Here is a 236-residue protein sequence, read N- to C-terminus: MASRVICFLSLNLLLLDVITRLQVSGQLQLSPKKVDAEIGQEVKLTCEVLRDTSQGCSWLFRNSSSELLQPTFIIYVSSSRSKLNDILDPNLFSARKENNKYILTLSKFSTKNQGYYFCSITSNSVMYFSPLVPVFQKVNSIITKPVTRAPTPVPPPTGTPRPLRPEACRPGASGSVEGMGLGFACDIYIWAPLAGICAVLLLSLVITLICCHRNRRRVCKCPRPLVKPRPSEKFV.

The first 26 residues, 1–26, serve as a signal peptide directing secretion; the sequence is MASRVICFLSLNLLLLDVITRLQVSG. The region spanning 27–130 is the Ig-like V-type domain; it reads QLQLSPKKVD…ITSNSVMYFS (104 aa). At 27 to 189 the chain is on the extracellular side; it reads QLQLSPKKVD…MGLGFACDIY (163 aa). The cysteines at positions 47 and 119 are disulfide-linked. The N-linked (GlcNAc...) asparagine glycan is linked to asparagine 63. O-linked (GalNAc...) threonine; partial glycosylation occurs at threonine 144. Threonine 148, threonine 152, threonine 158, and threonine 160 each carry an O-linked (GalNAc...) threonine glycan. The disordered stretch occupies residues 150–170; the sequence is APTPVPPPTGTPRPLRPEACR. The helical transmembrane segment at 190–210 threads the bilayer; the sequence is IWAPLAGICAVLLLSLVITLI. Residue cysteine 211 is the site of S-palmitoyl cysteine attachment. The Cytoplasmic portion of the chain corresponds to 211–236; the sequence is CCHRNRRRVCKCPRPLVKPRPSEKFV.

In terms of assembly, forms disulfide-linked heterodimers with CD8B at the cell surface. Also forms homodimers in several cell types including NK-cells or peripheral blood T-lymphocytes. Interacts with the MHC class I HLA-A/B2M dimer. Interacts with LCK in a zinc-dependent manner. In terms of processing, palmitoylated, but association with CD8B seems to be more important for the enrichment of CD8A in lipid rafts. O-glycosylated. Post-translationally, phosphorylated in cytotoxic T-lymphocytes (CTLs) following activation.

It localises to the cell membrane. In terms of biological role, integral membrane glycoprotein that plays an essential role in the immune response and serves multiple functions in responses against both external and internal offenses. In T-cells, functions primarily as a coreceptor for MHC class I molecule:peptide complex. The antigens presented by class I peptides are derived from cytosolic proteins while class II derived from extracellular proteins. Interacts simultaneously with the T-cell receptor (TCR) and the MHC class I proteins presented by antigen presenting cells (APCs). In turn, recruits the Src kinase LCK to the vicinity of the TCR-CD3 complex. LCK then initiates different intracellular signaling pathways by phosphorylating various substrates ultimately leading to lymphokine production, motility, adhesion and activation of cytotoxic T-lymphocytes (CTLs). This mechanism enables CTLs to recognize and eliminate infected cells and tumor cells. In NK-cells, the presence of CD8A homodimers at the cell surface provides a survival mechanism allowing conjugation and lysis of multiple target cells. CD8A homodimer molecules also promote the survival and differentiation of activated lymphocytes into memory CD8 T-cells. In Rattus norvegicus (Rat), this protein is T-cell surface glycoprotein CD8 alpha chain (Cd8a).